Here is a 115-residue protein sequence, read N- to C-terminus: Large ribosomal subunit protein uL22 (115 aa).

It belongs to the universal ribosomal protein uL22 family. In terms of assembly, part of the 50S ribosomal subunit.

Its function is as follows. This protein binds specifically to 23S rRNA; its binding is stimulated by other ribosomal proteins, e.g. L4, L17, and L20. It is important during the early stages of 50S assembly. It makes multiple contacts with different domains of the 23S rRNA in the assembled 50S subunit and ribosome. The globular domain of the protein is located near the polypeptide exit tunnel on the outside of the subunit, while an extended beta-hairpin is found that lines the wall of the exit tunnel in the center of the 70S ribosome. This Limosilactobacillus reuteri subsp. reuteri (strain JCM 1112) (Lactobacillus reuteri) protein is Large ribosomal subunit protein uL22.